Consider the following 732-residue polypeptide: MSTPDNHGKKAPQFAAFKPLTTVQNANDCCCDGACSSTPTLSENVSGTRYSWKVSGMDCAACARKVENAVRQLAGVNQVQVLFATEKLVVDADNDIRAQVESALQKAGYSLRDEQAAEEPQASRLKENLPLITLIVMMAISWGLEQFNHPFGQLAFIATTLVGLYPIARQALRLIKSGSYFAIETLMSVAAIGALFIGATAEAAMVLLLFLIGERLEGWAASRARQGVSALMALKPETATRLRKGEREEVAINSLRPGDVIEVAAGGRLPADGKLLSPFASFDESALTGESIPVERATGDKVPAGATSVDRLVTLEVLSEPGASAIDRILKLIEEAEERRAPIERFIDRFSRIYTPAIMAVALLVTLVPPLLFAASWQEWIYKGLTLLLIGCPCALVISTPAAITSGLAAAARRGALIKGGAALEQLGRVTQVAFDKTGTLTVGKPRVTAIHPATGISESELLTLAAAVEQGATHPLAQAIVREAQVAELAIPTAESQRALVGSGIEAQVNGERVLICAAGKHPADAFTGLINELESAGQTVVLVVRNDDVLGVIALQDTLRADAATAISELNALGVKGVILTGDNPRAAAAIAGELGLEFKAGLLPEDKVKAVTELNQHAPLAMVGDGINDAPAMKAAAIGIAMGSGTDVALETADAALTHNHLRGLVQMIELARATHANIRQNITIALGLKGIFLVTTLLGMTGLWLAVLADTGATVLVTANALRLLRRR.

Residues 1 to 124 (MSTPDNHGKK…QAAEEPQASR (124 aa)) lie on the Cytoplasmic side of the membrane. Residues 48–112 (TRYSWKVSGM…ALQKAGYSLR (65 aa)) form the HMA domain. Zn(2+) contacts are provided by D58, C59, and C62. A helical membrane pass occupies residues 125–145 (LKENLPLITLIVMMAISWGLE). Q146 is a topological domain (periplasmic). The chain crosses the membrane as a helical span at residues 147 to 167 (FNHPFGQLAFIATTLVGLYPI). Residues 168–179 (ARQALRLIKSGS) lie on the Cytoplasmic side of the membrane. The helical transmembrane segment at 180–197 (YFAIETLMSVAAIGALFI) threads the bilayer. Over 198-202 (GATAE) the chain is Periplasmic. Residues 203–222 (AAMVLLLFLIGERLEGWAAS) traverse the membrane as a helical segment. The Cytoplasmic portion of the chain corresponds to 223–356 (RARQGVSALM…IDRFSRIYTP (134 aa)). A helical transmembrane segment spans residues 357–377 (AIMAVALLVTLVPPLLFAASW). Residues 378–383 (QEWIYK) lie on the Periplasmic side of the membrane. A helical transmembrane segment spans residues 384-404 (GLTLLLIGCPCALVISTPAAI). Zn(2+) contacts are provided by C392 and C394. The Cytoplasmic portion of the chain corresponds to 405 to 685 (TSGLAAAARR…RATHANIRQN (281 aa)). D436 acts as the 4-aspartylphosphate intermediate in catalysis. 3 residues coordinate Mg(2+): D436, T438, and D628. Residues 686–702 (ITIALGLKGIFLVTTLL) form a helical membrane-spanning segment. Over 703–707 (GMTGL) the chain is Periplasmic. The chain crosses the membrane as a helical span at residues 708–729 (WLAVLADTGATVLVTANALRLL). D714 contacts Zn(2+). Over 730 to 732 (RRR) the chain is Cytoplasmic.

The protein belongs to the cation transport ATPase (P-type) (TC 3.A.3) family. Type IB subfamily.

The protein localises to the cell inner membrane. It carries out the reaction Pb(2+)(in) + ATP + H2O = Pb(2+)(out) + ADP + phosphate + H(+). It catalyses the reaction Zn(2+)(in) + ATP + H2O = Zn(2+)(out) + ADP + phosphate + H(+). The catalysed reaction is Cd(2+)(in) + ATP + H2O = Cd(2+)(out) + ADP + phosphate + H(+). With respect to regulation, inhibited by orthovanadate. Functionally, confers resistance to zinc, cadmium and lead. Couples the hydrolysis of ATP with the export of zinc, cadmium or lead, with highest activity when the metals are present as metal-thiolate complexes. Can also bind nickel, copper, cobalt and mercury. The chain is Zinc/cadmium/lead-transporting P-type ATPase from Escherichia coli (strain K12).